The primary structure comprises 157 residues: Ribosome maturation factor RimP (157 aa).

Belongs to the RimP family.

Its subcellular location is the cytoplasm. Functionally, required for maturation of 30S ribosomal subunits. In Enterococcus faecalis (strain ATCC 700802 / V583), this protein is Ribosome maturation factor RimP.